Here is a 315-residue protein sequence, read N- to C-terminus: Ribosomal RNA small subunit methyltransferase H (315 aa).

S-adenosyl-L-methionine contacts are provided by residues 33–35, aspartate 52, phenylalanine 84, aspartate 106, and glutamine 113; that span reads GGH. Positions 294–315 are disordered; the sequence is SSDELEENNRSHSAKLRVAEKL.

The protein belongs to the methyltransferase superfamily. RsmH family.

Its subcellular location is the cytoplasm. The enzyme catalyses cytidine(1402) in 16S rRNA + S-adenosyl-L-methionine = N(4)-methylcytidine(1402) in 16S rRNA + S-adenosyl-L-homocysteine + H(+). Functionally, specifically methylates the N4 position of cytidine in position 1402 (C1402) of 16S rRNA. The sequence is that of Ribosomal RNA small subunit methyltransferase H from Lactobacillus johnsonii (strain CNCM I-12250 / La1 / NCC 533).